Here is a 150-residue protein sequence, read N- to C-terminus: UPF0506 protein SJCHGC09643 (150 aa).

The signal sequence occupies residues 1 to 18; that stretch reads MNTCIQLLILCLVTVINS. Asn20, Asn32, Asn48, and Asn110 each carry an N-linked (GlcNAc...) asparagine glycan. 3 cysteine pairs are disulfide-bonded: Cys116-Cys130, Cys123-Cys134, and Cys129-Cys139.

The protein belongs to the UPF0506 family.

Its subcellular location is the secreted. In Schistosoma japonicum (Blood fluke), this protein is UPF0506 protein SJCHGC09643.